The chain runs to 97 residues: U-reduvitoxin-Pr10a (97 aa).

The signal sequence occupies residues 1 to 18; that stretch reads MKTALFLVFALAFIAVEG. Pacifastin domains lie at 22 to 59 and 62 to 97; these read KACS…CPPR and KQSC…RLCW. Disulfide bonds link Cys-24–Cys-42, Cys-37–Cys-56, and Cys-40–Cys-51. The segment at 57 to 59 is pro-Pro-Arg motif necessary for proteolytic processing; it reads PPR. Cystine bridges form between Cys-65–Cys-82, Cys-77–Cys-96, and Cys-80–Cys-91.

The protein belongs to the protease inhibitor I19 family. As to expression, expressed by the venom gland.

Its subcellular location is the secreted. In terms of biological role, inhibits trypsin activity and prophenoloxidase (PPO) activation, an enzyme essential for both clotting and insect innate immune responses. It does not inhibit activity of chymotrypsin and protease K, and has no effect on phenoloxidase (PO) activity. This chain is U-reduvitoxin-Pr10a, found in Platymeris rhadamanthus (Red spot assassin bug).